The chain runs to 189 residues: Parkinson disease protein 7 homolog (189 aa).

An N-acetylalanine modification is found at Ala2. S-palmitoyl cysteine attachment occurs at residues Cys46 and Cys53. Tyr67 bears the Phosphotyrosine mark. Cys106 (nucleophile) is an active-site residue. Cys106 carries the post-translational modification Cysteine sulfinic acid (-SO2H); alternate. Cys106 carries S-palmitoyl cysteine; alternate lipidation. Residue His126 is part of the active site. Lys130 is covalently cross-linked (Glycyl lysine isopeptide (Lys-Gly) (interchain with G-Cter in SUMO)). Position 148 is an N6-acetyllysine (Lys148). An N6-succinyllysine modification is found at Lys182.

Belongs to the peptidase C56 family. Homodimer. Binds EFCAB6/DJBP and PIAS2. Part of a ternary complex containing PARK7, EFCAB6/DJBP and AR. Binds to HIPK1. Interacts (via N-terminus) with OTUD7B. Interacts with BBS1, CLCF1 and MTERF. Interacts (via C-terminus) with NCF1; the interaction is enhanced by LPS and modulates NCF1 phosphorylation and membrane translocation. Interacts with NENF. Deglycase activity does not require glutathione as a cofactor, however, glycated glutathione constitutes a PARK7 substrate. is required as a cofactor. Post-translationally, sumoylated on Lys-130 by PIAS2 or PIAS4; which is essential for cell-growth promoting activity and transforming activity. In terms of processing, undergoes cleavage of a C-terminal peptide and subsequent activation of protease activity in response to oxidative stress. Expressed in erythroblasts and in mature red blood cells from peripheral blood (at protein level). In pancreas, expression is higher in islets than surrounding exocrine tissues.

It is found in the cell membrane. Its subcellular location is the cytoplasm. It localises to the membrane raft. The protein localises to the nucleus. The protein resides in the mitochondrion. It is found in the endoplasmic reticulum. It catalyses the reaction N(omega)-(1-hydroxy-2-oxopropyl)-L-arginyl-[protein] + H2O = lactate + L-arginyl-[protein] + H(+). It carries out the reaction N(6)-(1-hydroxy-2-oxopropyl)-L-lysyl-[protein] + H2O = lactate + L-lysyl-[protein] + H(+). The enzyme catalyses S-(1-hydroxy-2-oxopropyl)-L-cysteinyl-[protein] + H2O = lactate + L-cysteinyl-[protein] + H(+). The catalysed reaction is N(omega)-(1-hydroxy-2-oxoethyl)-L-arginyl-[protein] + H2O = L-arginyl-[protein] + glycolate + H(+). It catalyses the reaction N(6)-(1-hydroxy-2-oxoethyl)-L-lysyl-[protein] + H2O = glycolate + L-lysyl-[protein] + H(+). It carries out the reaction S-(1-hydroxy-2-oxoethyl)-L-cysteinyl-[protein] + H2O = glycolate + L-cysteinyl-[protein] + H(+). The enzyme catalyses N(2)-(1-hydroxy-2-oxopropyl)-dGTP + H2O = lactate + dGTP + H(+). The catalysed reaction is N(2)-(1-hydroxy-2-oxopropyl)-GTP + H2O = lactate + GTP + H(+). It catalyses the reaction N(2)-(1-hydroxy-2-oxopropyl)-GDP + H2O = lactate + GDP + H(+). It carries out the reaction N(2)-(1-hydroxy-2-oxopropyl)-GMP + H2O = lactate + GMP + H(+). The enzyme catalyses N(2)-(1-hydroxy-2-oxoethyl)-dGTP + H2O = dGTP + glycolate + H(+). The catalysed reaction is N(2)-(1-hydroxy-2-oxoethyl)-GTP + H2O = glycolate + GTP + H(+). It catalyses the reaction N(2)-(1-hydroxy-2-oxoethyl)-GDP + H2O = glycolate + GDP + H(+). It carries out the reaction N(2)-(1-hydroxy-2-oxoethyl)-GMP + H2O = glycolate + GMP + H(+). The enzyme catalyses an N(2)-(1-hydroxy-2-oxopropyl)-guanosine in RNA + H2O = a guanosine in RNA + lactate + H(+). The catalysed reaction is an N(2)-(1-hydroxy-2-oxopropyl)-2'-deoxyguanosine in DNA + H2O = a 2'-deoxyguanosine in DNA + lactate + H(+). It catalyses the reaction an N(2)-(1-hydroxy-2-oxoethyl)-guanosine in RNA + H2O = a guanosine in RNA + glycolate + H(+). It carries out the reaction an N(2)-(1-hydroxy-2-oxoethyl)-2'-deoxyguanosine in DNA + H2O = a 2'-deoxyguanosine in DNA + glycolate + H(+). Its function is as follows. Multifunctional protein with controversial molecular function which plays an important role in cell protection against oxidative stress and cell death acting as oxidative stress sensor and redox-sensitive chaperone and protease. It is involved in neuroprotective mechanisms like the stabilization of NFE2L2 and PINK1 proteins, male fertility as a positive regulator of androgen signaling pathway as well as cell growth and transformation through, for instance, the modulation of NF-kappa-B signaling pathway. Has been described as a protein and nucleotide deglycase that catalyzes the deglycation of the Maillard adducts formed between amino groups of proteins or nucleotides and reactive carbonyl groups of glyoxals. But this function is rebuted by other works. As a protein deglycase, repairs methylglyoxal- and glyoxal-glycated proteins, and releases repaired proteins and lactate or glycolate, respectively. Deglycates cysteine, arginine and lysine residues in proteins, and thus reactivates these proteins by reversing glycation by glyoxals. Acts on early glycation intermediates (hemithioacetals and aminocarbinols), preventing the formation of advanced glycation endproducts (AGE) that cause irreversible damage. Also functions as a nucleotide deglycase able to repair glycated guanine in the free nucleotide pool (GTP, GDP, GMP, dGTP) and in DNA and RNA. Is thus involved in a major nucleotide repair system named guanine glycation repair (GG repair), dedicated to reversing methylglyoxal and glyoxal damage via nucleotide sanitization and direct nucleic acid repair. Protects histones from adduction by methylglyoxal, controls the levels of methylglyoxal-derived argininine modifications on chromatin. Able to remove the glycations and restore histone 3, histone glycation disrupts both local and global chromatin architecture by altering histone-DNA interactions as well as histone acetylation and ubiquitination levels. Displays a very low glyoxalase activity that may reflect its deglycase activity. Eliminates hydrogen peroxide and protects cells against hydrogen peroxide-induced cell death. Required for correct mitochondrial morphology and function as well as for autophagy of dysfunctional mitochondria. Plays a role in regulating expression or stability of the mitochondrial uncoupling proteins SLC25A14 and SLC25A27 in dopaminergic neurons of the substantia nigra pars compacta and attenuates the oxidative stress induced by calcium entry into the neurons via L-type channels during pacemaking. Regulates astrocyte inflammatory responses, may modulate lipid rafts-dependent endocytosis in astrocytes and neuronal cells. In pancreatic islets, involved in the maintenance of mitochondrial reactive oxygen species (ROS) levels and glucose homeostasis in an age- and diet dependent manner. Protects pancreatic beta cells from cell death induced by inflammatory and cytotoxic setting. Binds to a number of mRNAs containing multiple copies of GG or CC motifs and partially inhibits their translation but dissociates following oxidative stress. Metal-binding protein able to bind copper as well as toxic mercury ions, enhances the cell protection mechanism against induced metal toxicity. In macrophages, interacts with the NADPH oxidase subunit NCF1 to direct NADPH oxidase-dependent ROS production, and protects against sepsis. The protein is Parkinson disease protein 7 homolog of Mus musculus (Mouse).